The primary structure comprises 287 residues: MSKLANRADWADDEEFDDPSALPAQQVTTNKDGTKTVVSYRFNDEGKKVKVTRRIKTTVVREHVNPQVAERRSWAKFGLEKGHAPGPSFDTTSVGENIAFRPSINWKAQAAEAEKNGGEKGSMKDQLKDKKVKCRICSGEHFTARCPFKDTMAPVDEPTAGGAGEDDEAAAGAVGTGSGSYVPPHLRKGAAGGGERMGGKFEKDDLATLRVTNVSELAEEGELRDLFERFGRVTRVFLARDRETQRAKGFAFISFADRSDAARACEKMDGFGYRHLILRVEFAKRTT.

Disordered stretches follow at residues 1-34 (MSKLANRADWADDEEFDDPSALPAQQVTTNKDGT) and 159-184 (TAGGAGEDDEAAAGAVGTGSGSYVPP). An RRM domain is found at 207-285 (ATLRVTNVSE…LILRVEFAKR (79 aa)).

Belongs to the eIF-3 subunit G family. In terms of assembly, component of the eukaryotic translation initiation factor 3 (eIF-3) complex.

It localises to the cytoplasm. In terms of biological role, RNA-binding component of the eukaryotic translation initiation factor 3 (eIF-3) complex, which is involved in protein synthesis of a specialized repertoire of mRNAs and, together with other initiation factors, stimulates binding of mRNA and methionyl-tRNAi to the 40S ribosome. The eIF-3 complex specifically targets and initiates translation of a subset of mRNAs involved in cell proliferation. This subunit can bind 18S rRNA. The protein is Eukaryotic translation initiation factor 3 subunit G (tif35) of Aspergillus oryzae (strain ATCC 42149 / RIB 40) (Yellow koji mold).